Reading from the N-terminus, the 152-residue chain is Putative RING finger protein 157L (152 aa).

An RING-type zinc finger spans residues 111-146; sequence CVVCYENEICIKIQPCNHFVVCKSCFNRLNTCPMCR.

The protein belongs to the IIV-6 157L family.

This chain is Putative RING finger protein 157L, found in Invertebrate iridescent virus 6 (IIV-6).